Consider the following 325-residue polypeptide: Putative 1-aminocyclopropane-1-carboxylate deaminase (325 aa).

K54 is subject to N6-(pyridoxal phosphate)lysine.

This sequence belongs to the ACC deaminase/D-cysteine desulfhydrase family. It depends on pyridoxal 5'-phosphate as a cofactor.

It carries out the reaction 1-aminocyclopropane-1-carboxylate + H2O = 2-oxobutanoate + NH4(+). In Pyrococcus horikoshii (strain ATCC 700860 / DSM 12428 / JCM 9974 / NBRC 100139 / OT-3), this protein is Putative 1-aminocyclopropane-1-carboxylate deaminase.